We begin with the raw amino-acid sequence, 633 residues long: Early transcription factor 70 kDa subunit (633 aa).

In terms of domain architecture, Helicase ATP-binding spans 32–185 (RTILDHNESV…SNIISIMSDE (154 aa)). An ATP-binding site is contributed by 45–52 (HIMGSGKT). The DEXH box motif lies at 135–138 (DEAH). The Helicase C-terminal domain maps to 326 to 505 (KFKYFIDTIG…TLPFDIKKLL (180 aa)).

It belongs to the helicase family. VETF subfamily. Heterodimer of a 70 kDa and a 82 kDa subunit. Part of the early transcription complex composed of ETF, RAP94, and the DNA-directed RNA polymerase.

It is found in the virion. In terms of biological role, acts with RNA polymerase to initiate transcription from early gene promoters. Is recruited by the RPO-associated protein of 94 kDa (RAP94) to form the early transcription complex, which also contains the core RNA polymerase. ETF heterodimer binds to early gene promoters. This is Early transcription factor 70 kDa subunit (VETFS) from Vertebrata (FPV).